The sequence spans 685 residues: Mitotic interactor and substrate of PLK1 (685 aa).

Phosphoserine; by CDK1 is present on Ser-78. Disordered stretches follow at residues 155–181 and 207–253; these read SGTV…STPL and NKEV…QGKG. Position 172 is a phosphothreonine; by CDK1 (Thr-172). Thr-179 carries the phosphothreonine modification. Ser-214 carries the post-translational modification Phosphoserine; by CDK1. Thr-219 carries the post-translational modification Phosphothreonine. Position 284 is a phosphoserine; by CDK1 (Ser-284). A Phosphothreonine; by CDK1 modification is found at Thr-287. The tract at residues 345–499 is disordered; the sequence is GRPSLYVQRD…PWKLPRGSPQ (155 aa). Phosphoserine is present on Ser-348. Residues 355–371 show a composition bias toward basic and acidic residues; it reads MVQETQREEDHRREGLH. Thr-377 is modified (phosphothreonine; by CDK1). Phosphoserine is present on Ser-382. Positions 392-417 are enriched in low complexity; sequence ALSSDSILSPDSILSPAPDARAADPA. Ser-394, Ser-395, and Ser-397 each carry phosphoserine; by PLK1. 2 positions are modified to phosphoserine: Ser-406 and Ser-436. Residues 454 to 469 show a composition bias toward polar residues; the sequence is SGLSTVDTEAATSPKA. Ser-477 is subject to Phosphoserine; by PLK1. Positions 478–488 are enriched in polar residues; sequence ESSGKPMSTKQ. 2 positions are modified to phosphoserine: Ser-547 and Ser-549. Residues 551–575 adopt a coiled-coil conformation; that stretch reads DLLERERESVLRREREVAEERRNAL. Disordered regions lie at residues 575–607 and 629–651; these read LFPE…SYSV and PVDS…NPSD. Ser-581 bears the Phosphoserine; by PLK1 mark. Position 583 is a phosphothreonine (Thr-583). Over residues 589-607 the composition is skewed to polar residues; it reads DQNSRSSSQASGITGSYSV. Position 592 is a phosphoserine; by PLK1 (Ser-592). A Phosphoserine modification is found at Ser-681.

The protein belongs to the MISP family. In terms of assembly, associates with F-actin. Interacts with DCTN1; this interaction regulates DCTN1 distribution at the cell cortex. Interacts with PTK2/FAK and MAPRE1. Phosphorylated by CDK1 and PLK1. CDK1 is the priming kinase for PLK1 phosphorylation. Phosphorylation by PLK1 is required for proper spindle orientation at metaphase.

Its subcellular location is the cell junction. The protein localises to the focal adhesion. It is found in the cytoplasm. The protein resides in the cytoskeleton. It localises to the cell cortex. Plays a role in mitotic spindle orientation and mitotic progression. Regulates the distribution of dynactin at the cell cortex in a PLK1-dependent manner, thus stabilizing cortical and astral microtubule attachments required for proper mitotic spindle positioning. May link microtubules to the actin cytospkeleton and focal adhesions. May be required for directed cell migration and centrosome orientation. May also be necessary for proper stacking of the Golgi apparatus. The chain is Mitotic interactor and substrate of PLK1 from Pongo abelii (Sumatran orangutan).